The primary structure comprises 218 residues: Pyridoxine/pyridoxamine 5'-phosphate oxidase (218 aa).

Residues 12-15 and arginine 70 contribute to the substrate site; that span reads RLAY. Residues 65–70, 80–81, lysine 87, and glutamine 109 each bind FMN; these read RTVLLR and YT. Positions 127, 131, and 135 each coordinate substrate. FMN is bound by residues 145–146 and tryptophan 191; that span reads QS. A substrate-binding site is contributed by 197–199; sequence RLH. Arginine 201 serves as a coordination point for FMN.

Belongs to the pyridoxamine 5'-phosphate oxidase family. As to quaternary structure, homodimer. It depends on FMN as a cofactor.

The catalysed reaction is pyridoxamine 5'-phosphate + O2 + H2O = pyridoxal 5'-phosphate + H2O2 + NH4(+). It carries out the reaction pyridoxine 5'-phosphate + O2 = pyridoxal 5'-phosphate + H2O2. It participates in cofactor metabolism; pyridoxal 5'-phosphate salvage; pyridoxal 5'-phosphate from pyridoxamine 5'-phosphate: step 1/1. It functions in the pathway cofactor metabolism; pyridoxal 5'-phosphate salvage; pyridoxal 5'-phosphate from pyridoxine 5'-phosphate: step 1/1. Functionally, catalyzes the oxidation of either pyridoxine 5'-phosphate (PNP) or pyridoxamine 5'-phosphate (PMP) into pyridoxal 5'-phosphate (PLP). This chain is Pyridoxine/pyridoxamine 5'-phosphate oxidase, found in Deinococcus geothermalis (strain DSM 11300 / CIP 105573 / AG-3a).